The chain runs to 302 residues: RuBisCO operon transcriptional regulator (302 aa).

The region spanning 1–60 is the HTH lysR-type domain; sequence MHVSLRQLRVFEAVARHNSYTRAAEELHLSQPAVSMQVRQLEDEIGLSLFERLGKQVVLT. The segment at residues 20 to 39 is a DNA-binding region (H-T-H motif); that stretch reads YTRAAEELHLSQPAVSMQVR.

Belongs to the LysR transcriptional regulatory family.

In terms of biological role, trans-acting transcriptional regulator of RuBisCO genes (rbcAB) expression. The sequence is that of RuBisCO operon transcriptional regulator (rbcR) from Allochromatium vinosum (Chromatium vinosum).